A 293-amino-acid polypeptide reads, in one-letter code: tRNA pseudouridine synthase B (293 aa).

D39 (nucleophile) is an active-site residue.

Belongs to the pseudouridine synthase TruB family. Type 1 subfamily.

It carries out the reaction uridine(55) in tRNA = pseudouridine(55) in tRNA. Functionally, responsible for synthesis of pseudouridine from uracil-55 in the psi GC loop of transfer RNAs. The protein is tRNA pseudouridine synthase B of Thermobifida fusca (strain YX).